The sequence spans 238 residues: Large ribosomal subunit protein uL5c (238 aa).

It belongs to the universal ribosomal protein uL5 family. Part of the 50S ribosomal subunit; contacts the 5S rRNA.

It is found in the plastid. Its subcellular location is the chloroplast. In terms of biological role, binds 5S rRNA, forms part of the central protuberance of the 50S subunit. This Thalassiosira pseudonana (Marine diatom) protein is Large ribosomal subunit protein uL5c (rpl5).